A 158-amino-acid chain; its full sequence is Transcription factor BTF3 homolog 4 (158 aa).

Residue lysine 5 is modified to N6-methyllysine. Residues 33–98 (TADDKKLQSS…AEAKPITEML (66 aa)) form the NAC-A/B domain. Threonine 111 bears the Phosphothreonine mark. Positions 122–158 (RQVLDSKAPKPEDIDEEDDDVPDLVENFDEASKNEAN) are disordered. Residues 134 to 150 (DIDEEDDDVPDLVENFD) are compositionally biased toward acidic residues.

Belongs to the NAC-beta family.

The protein is Transcription factor BTF3 homolog 4 (BTF3L4) of Homo sapiens (Human).